Here is a 148-residue protein sequence, read N- to C-terminus: Large ribosomal subunit protein uL15 (148 aa).

A disordered region spans residues 1-47 (MAFSLENLRPAPGSRPKSKRVGRGSSSGKGKTSSRGHKGQGRGTGKV).

Belongs to the universal ribosomal protein uL15 family. As to quaternary structure, part of the 50S ribosomal subunit.

Functionally, binds to the 23S rRNA. This is Large ribosomal subunit protein uL15 from Kosmotoga olearia (strain ATCC BAA-1733 / DSM 21960 / TBF 19.5.1).